The sequence spans 349 residues: Probable L-asparaginase periplasmic (349 aa).

An N-terminal signal peptide occupies residues 1–21; sequence MKLTKLALCTLFGLGVSIANA. Positions 25-349 constitute an Asparaginase/glutaminase domain; sequence PNITILATGG…KVIQQYFEDF (325 aa). Threonine 35 (O-isoaspartyl threonine intermediate) is an active-site residue. Substrate-binding positions include serine 81 and 112 to 113; that span reads TD. The cysteines at positions 100 and 128 are disulfide-linked.

It belongs to the asparaginase 1 family.

Its subcellular location is the periplasm. The catalysed reaction is L-asparagine + H2O = L-aspartate + NH4(+). This is Probable L-asparaginase periplasmic (ansB) from Haemophilus influenzae (strain ATCC 51907 / DSM 11121 / KW20 / Rd).